Here is a 95-residue protein sequence, read N- to C-terminus: Integration host factor subunit beta (95 aa).

It belongs to the bacterial histone-like protein family. As to quaternary structure, heterodimer of an alpha and a beta chain.

This protein is one of the two subunits of integration host factor, a specific DNA-binding protein that functions in genetic recombination as well as in transcriptional and translational control. The polypeptide is Integration host factor subunit beta (Ruegeria sp. (strain TM1040) (Silicibacter sp.)).